Reading from the N-terminus, the 352-residue chain is DNA integrity scanning protein DisA (352 aa).

The region spanning 3-143 (PQELIEKIKL…NYKYVVNQVD (141 aa)) is the DAC domain. ATP-binding positions include Gly71, Leu89, and 102–106 (TRHRT).

Belongs to the DisA family. Homooctamer. It depends on Mg(2+) as a cofactor.

The enzyme catalyses 2 ATP = 3',3'-c-di-AMP + 2 diphosphate. Functionally, participates in a DNA-damage check-point. DisA forms globular foci that rapidly scan along the chromosomes searching for lesions. Its function is as follows. Also has diadenylate cyclase activity, catalyzing the condensation of 2 ATP molecules into cyclic di-AMP (c-di-AMP). c-di-AMP likely acts as a signaling molecule that may couple DNA integrity with a cellular process. The chain is DNA integrity scanning protein DisA from Thermotoga petrophila (strain ATCC BAA-488 / DSM 13995 / JCM 10881 / RKU-1).